We begin with the raw amino-acid sequence, 281 residues long: Transmembrane protein 163 (281 aa).

The Cytoplasmic portion of the chain corresponds to 1–80 (MEPLDTELCY…HEAQNYRKKA (80 aa)). The disordered stretch occupies residues 16-44 (IVQPSCNGQTPPGHRTLSPTQQMDHEQQM). A helical membrane pass occupies residues 81–101 (LWVSWLSIAITLILAIAAFTV). Residues 102–108 (SVMRYSA) lie on the Extracellular side of the membrane. The chain crosses the membrane as a helical span at residues 109-129 (SSFGFALDAVLDVLSSAIVLW). The Cytoplasmic segment spans residues 130 to 145 (RYSNAAAVHSAHREYM). The helical transmembrane segment at 146-166 (ACCILGVIFLLSSICIVSKAI) threads the bilayer. Topologically, residues 167–179 (HDLSIRVMPEVDG) are extracellular. A helical membrane pass occupies residues 180–200 (FLFSVSILSGILCSLLAAIKF). The Cytoplasmic portion of the chain corresponds to 201–209 (MLGKVLTSR). The helical transmembrane segment at 210–230 (ALITDGFNSLVGGIMGFSILL) threads the bilayer. The Extracellular segment spans residues 231–240 (SAEVYKHNSK). The chain crosses the membrane as a helical span at residues 241–261 (VWYLDGSVGILIGLIIMSYGI). Topologically, residues 262-281 (KLLMDMVPRVRQTRHYEMFE) are cytoplasmic.

It belongs to the TMEM163 family.

Its subcellular location is the cytoplasmic vesicle. It is found in the secretory vesicle. The protein resides in the synaptic vesicle membrane. It localises to the early endosome membrane. May bind zinc and other divalent cations and recruit them to vesicular organelles. This Xenopus laevis (African clawed frog) protein is Transmembrane protein 163 (tmem163).